A 385-amino-acid polypeptide reads, in one-letter code: Digeranylgeranylglycerophospholipid reductase 2 (385 aa).

10 residues coordinate FAD: alanine 13, glutamate 32, cysteine 43, alanine 44, glycine 46, arginine 95, alanine 119, aspartate 273, glycine 285, and isoleucine 286.

It belongs to the geranylgeranyl reductase family. DGGGPL reductase subfamily. It depends on FAD as a cofactor.

It catalyses the reaction a 2,3-bis-O-phytanyl-sn-glycerol 1-phospholipid + 8 A = a 2,3-bis-O-(geranylgeranyl)-sn-glycerol 1-phospholipid + 8 AH2. The catalysed reaction is 2,3-bis-O-(phytanyl)-sn-glycerol 1-phosphate + 8 A = 2,3-bis-O-(geranylgeranyl)-sn-glycerol 1-phosphate + 8 AH2. It carries out the reaction CDP-2,3-bis-O-(geranylgeranyl)-sn-glycerol + 8 AH2 = CDP-2,3-bis-O-(phytanyl)-sn-glycerol + 8 A. The enzyme catalyses archaetidylserine + 8 AH2 = 2,3-bis-O-phytanyl-sn-glycero-3-phospho-L-serine + 8 A. It participates in membrane lipid metabolism; glycerophospholipid metabolism. Functionally, is involved in the reduction of 2,3-digeranylgeranylglycerophospholipids (unsaturated archaeols) into 2,3-diphytanylglycerophospholipids (saturated archaeols) in the biosynthesis of archaeal membrane lipids. Catalyzes the formation of archaetidic acid (2,3-di-O-phytanyl-sn-glyceryl phosphate) from 2,3-di-O-geranylgeranylglyceryl phosphate (DGGGP) via the hydrogenation of each double bond of the isoprenoid chains. Is also probably able to reduce double bonds of geranyl groups in CDP-2,3-bis-O-(geranylgeranyl)-sn-glycerol and archaetidylserine, thus acting at various stages in the biosynthesis of archaeal membrane lipids. This is Digeranylgeranylglycerophospholipid reductase 2 from Methanothermobacter thermautotrophicus (strain ATCC 29096 / DSM 1053 / JCM 10044 / NBRC 100330 / Delta H) (Methanobacterium thermoautotrophicum).